The sequence spans 1092 residues: Extended synaptotagmin-1 (1092 aa).

N-acetylmethionine is present on methionine 1. Topologically, residues 1 to 28 are cytoplasmic; it reads MEHSPEEGASPEPSGQPPATDSTRDGGS. The interval 1 to 36 is disordered; it reads MEHSPEEGASPEPSGQPPATDSTRDGGSGVPPAGPG. A helical transmembrane segment spans residues 29 to 49; it reads GVPPAGPGAASEALAVLTSFG. The Lumenal segment spans residues 50-52; sequence RRL. The helical transmembrane segment at 53-73 threads the bilayer; the sequence is LVLVPVYLAGAAGLSVGFVLF. The Cytoplasmic segment spans residues 74–1092; sequence GLALYLGWRR…LMDDRDKGGS (1019 aa). In terms of domain architecture, SMP-LTD spans 125–303; the sequence is DVEKAEWLNK…LPNRLLVPLV (179 aa). C2 domains are found at residues 302-423, 444-570, 616-738, and 769-886; these read LVPD…DNWY, DAEK…QLSS, DAPP…DEWL, and QVNS…ALSG. Serine 314 carries the post-translational modification Phosphoserine; by CDK5. The Ca(2+) site is built by lysine 334, aspartate 335, aspartate 347, aspartate 394, aspartate 396, aspartate 398, aspartate 400, and aspartate 401. The disordered stretch occupies residues 604–628; it reads WDRESLETGSSVDAPPRPYHTTPNS. At lysine 804 the chain carries N6-acetyllysine. Serine 807 carries the phosphoserine modification. The interval 909–937 is disordered; that stretch reads HSHSYSHSHSSSSLNDEPEALGGPTHPAS. Residues 911–921 show a composition bias toward low complexity; sequence HSYSHSHSSSS. Phosphoserine occurs at positions 937 and 951. One can recognise a C2 5 domain in the interval 959-1081; sequence PLGQVKLTVW…DLSQGAAQWY (123 aa). Tyrosine 997 bears the Phosphotyrosine mark. The required for phosphatidylinositol 4,5-bisphosphate-dependent location at the cell membrane stretch occupies residues 1006-1013; that stretch reads KNRSTKRK.

The protein belongs to the extended synaptotagmin family. As to quaternary structure, interacts with ESYT2 and ESYT3. Interacts with ADGRD1; inhibiting the G-protein-coupled receptor activity of ADGRD1. Interaction with ADGRD1 is abolished when cytosolic calcium increases, relieving ADGRD1 G-protein-coupled receptor activity. Interacts (phosphorylated form) with SLC2A4. In terms of processing, phosphorylated on Ser residues in insulin-treated adipocytes (in vitro); this promotes interaction with SLC2A4.

It is found in the endoplasmic reticulum membrane. The protein localises to the cell membrane. Binds calcium (via the C2 domains) and translocates to sites of contact between the endoplasmic reticulum and the cell membrane in response to increased cytosolic calcium levels. Helps tether the endoplasmic reticulum to the cell membrane and promotes the formation of appositions between the endoplasmic reticulum and the cell membrane. Acts as an inhibitor of ADGRD1 G-protein-coupled receptor activity in absence of cytosolic calcium. Binds glycerophospholipids in a barrel-like domain and may play a role in cellular lipid transport. This is Extended synaptotagmin-1 (Esyt1) from Mus musculus (Mouse).